The following is a 263-amino-acid chain: Chorismate mutase 2 (263 aa).

The Chorismate mutase domain occupies Cys-3–Asp-256.

Homodimer. In terms of tissue distribution, expressed in root, stem, stigma, anther, leaf, petal tube, petal limb and sepal tissues with highest levels in petal tubes and stems.

It localises to the cytoplasm. Its subcellular location is the cytosol. It catalyses the reaction chorismate = prephenate. The protein operates within metabolic intermediate biosynthesis; prephenate biosynthesis; prephenate from chorismate: step 1/1. With respect to regulation, no allosteric regulation. Functionally, mediates the conversion of chorismate to prephenate. The sequence is that of Chorismate mutase 2 from Petunia hybrida (Petunia).